A 122-amino-acid polypeptide reads, in one-letter code: HLLQFNKMIKFETRKNAVPFYAFYGCYCGWGGQRRPKDATDRCCFVHDCCYGKLTKCNTKWDIYRYSLKSGYITCGKGTWCKEQICECDRVAAECLRRSLSTYKNEYMFYPKSRCRRPSETC.

Disulfide bonds link C26–C115, C28–C44, C43–C95, C49–C122, C50–C88, C57–C81, and C75–C86. Ca(2+) contacts are provided by Y27, G29, and G31. H47 is a catalytic residue. D48 contributes to the Ca(2+) binding site. D89 is an active-site residue.

The protein belongs to the phospholipase A2 family. Group II subfamily. D49 sub-subfamily. As to quaternary structure, when this protein is associated with crotapotin (F5 or F7), it forms the crotoxin protein. The cofactor is Ca(2+). Expressed by the venom gland.

The protein resides in the secreted. It catalyses the reaction a 1,2-diacyl-sn-glycero-3-phosphocholine + H2O = a 1-acyl-sn-glycero-3-phosphocholine + a fatty acid + H(+). With respect to regulation, activated by heparin. Inhibited by its chaperone crotapotin. In terms of biological role, snake venom phospholipase A2 (PLA2) that shows moderate neurotoxic activity in isolated mouse phrenic nerve diaphragm but shows high neurotoxic activity in a chick biventer cervis preparation. Also shows a high bactericidal effect against both Gram-negative and Gram-positive bacteria. PLA2 catalyzes the calcium-dependent hydrolysis of the 2-acyl groups in 3-sn-phosphoglycerides. This is Basic phospholipase A2 F15 from Crotalus durissus terrificus (South American rattlesnake).